The sequence spans 625 residues: Chaperone protein HtpG (625 aa).

The interval 1–332 is a; substrate-binding; the sequence is MSKKTNAPVQ…TEDLSLNVSR (332 aa). The interval 333-545 is b; the sequence is EVVQSSPVMA…KDAMDSQMER (213 aa). Residues 546 to 625 are c; sequence MMKMMQQEMP…ELIEAATLSR (80 aa).

Belongs to the heat shock protein 90 family. In terms of assembly, homodimer.

The protein localises to the cytoplasm. Molecular chaperone. Has ATPase activity. The protein is Chaperone protein HtpG of Chlorobium phaeovibrioides (strain DSM 265 / 1930) (Prosthecochloris vibrioformis (strain DSM 265)).